The sequence spans 101 residues: MSIYVGNLSYDVSEADLTAVFAEYGSVKRVQLPTDRETGRMRGFGFVELEADAEETAAIEALDGAEWMGRDLKVNKAKPRENRSGGGSFGGGRKSYGGSRY.

The RRM domain occupies 2–79; sequence SIYVGNLSYD…RDLKVNKAKP (78 aa). The segment covering 73 to 83 has biased composition (basic and acidic residues); sequence KVNKAKPRENR. Residues 73–101 are disordered; sequence KVNKAKPRENRSGGGSFGGGRKSYGGSRY. Residues 84 to 101 are compositionally biased toward gly residues; it reads SGGGSFGGGRKSYGGSRY.

The protein is Putative RNA-binding protein RbpA (rbpA) of Synechocystis sp. (strain ATCC 27184 / PCC 6803 / Kazusa).